The chain runs to 992 residues: Meckelin (992 aa).

Residues 1–36 form the signal peptide; the sequence is MVTRTRPVAAMAVRSRSSSRTGTAYLLLVLCEVSWA. Residues 37–280 form a cysteine-rich region; that stretch reads QIFSFPFRRP…FHYIFESTAG (244 aa). Residues 37-516 lie on the Extracellular side of the membrane; the sequence is QIFSFPFRRP…SVKYEMNQGD (480 aa). 12 disulfides stabilise this stretch: C49–C62, C65–C78, C80–C97, C100–C114, C117–C127, C129–C150, C153–C170, C173–C184, C186–C197, C237–C246, C253–C268, and C354–C375. N242 carries N-linked (GlcNAc...) asparagine glycosylation. Residues 517-545 form a helical membrane-spanning segment; it reads ASVHTDIALGVLGGLAVLSSLLKTAGWKR. The Cytoplasmic segment spans residues 546–555; that stretch reads RVGSPMIDLQ. A helical transmembrane segment spans residues 556 to 587; it reads TVMKFLLYYAGDLANVFFIITVGTGLYWLIFF. At 588 to 600 the chain is on the extracellular side; it reads KAQKSVSVLLPMP. The helical transmembrane segment at 601 to 628 threads the bilayer; sequence VQEERFVTYVGCAFAMKALQFLHKFISQ. Over 629–667 the chain is Cytoplasmic; it reads ISIDIFFIDWERPKGKVLKAVEGEGGVRSATVPVSIWRT. Positions 668–676 form an intramembrane region, helical; sequence YFVANEWNE. A discontinuously helical transmembrane segment spans residues 668-698; it reads YFVANEWNEIQTVRKINPLFQVLTTLFFLEV. The stretch at 677–685 is an intramembrane region; sequence IQTVRKINP. The segment at residues 686 to 698 is an intramembrane region (helical); it reads LFQVLTTLFFLEV. Topologically, residues 699–728 are extracellular; the sequence is VGFKNLALMDSSSSLSRNPSDYTAPYSRIL. Residues 729–754 constitute an intramembrane region (helical); sequence RYAVATAIWLVIGIIQVVFFAAFYER. Residues 729–768 traverse the membrane as a discontinuously helical segment; that stretch reads RYAVATAIWLVIGIIQVVFFAAFYERFIEDKIRQFVDLCS. The stretch at 755–759 is an intramembrane region; sequence FIEDK. The helical intramembrane region spans 760–768; it reads IRQFVDLCS. At 769 to 923 the chain is on the cytoplasmic side; that stretch reads MSNVSVFLLS…SIFYNDEGHS (155 aa). The helical intramembrane region spans 924 to 926; that stretch reads FSS. The chain crosses the membrane as a discontinuously helical span at residues 924–949; it reads FSSVLYYGNEATLLIFDLLFFCVVDL. Residues 927 to 933 lie within the membrane without spanning it; it reads VLYYGNE. Residues 934 to 949 constitute an intramembrane region (helical); it reads ATLLIFDLLFFCVVDL. At 950-954 the chain is on the extracellular side; the sequence is ACQDF. The chain crosses the membrane as a helical span at residues 955–982; the sequence is VLASFLTYLQQEIFRFIRNTVGQKNLAT. The Cytoplasmic segment spans residues 983 to 992; that stretch reads KTLVDERFLI.

In terms of assembly, homodimer. Part of the tectonic-like complex (also named B9 complex). Interacts with DNAJB9, DNAJC10 and mutated SFTPC. Interacts with SYNE2 during the early establishment of cell polarity. Interacts (via C-terminus) with FLNA. Interacts with TMEM218. Interacts with WNT5A. Interacts with ROR2.

Its subcellular location is the cell membrane. The protein resides in the endoplasmic reticulum membrane. It localises to the cytoplasm. It is found in the cytoskeleton. The protein localises to the cilium basal body. Its function is as follows. Part of the tectonic-like complex which is required for tissue-specific ciliogenesis and may regulate ciliary membrane composition. Involved in centrosome migration to the apical cell surface during early ciliogenesis. Required for ciliary structure and function, including a role in regulating length and appropriate number through modulating centrosome duplication. Is a key regulator of stereociliary bundle orientation. Required for epithelial cell branching morphology. Essential for endoplasmic reticulum-associated degradation (ERAD) of surfactant protein C (sftpc). Involved in the negative regulation of canonical Wnt signaling, and activation of the non-canonical cascade stimulated by WNT5A. In non-canonical Wnt signaling, it may act as ROR2 coreceptor. This Mus musculus (Mouse) protein is Meckelin (Tmem67).